The following is a 506-amino-acid chain: Zinc finger and SCAN domain containing protein 4F (506 aa).

The segment at M1–S24 is disordered. The 83-residue stretch at S37–C119 folds into the SCAN box domain. 4 consecutive C2H2-type zinc fingers follow at residues Y395–H417, L424–H446, F452–H474, and Y480–H503.

In terms of tissue distribution, up-regulated in blastocyst outgrowths and is detectable in a mosaic fashion in ES cultures.

Its subcellular location is the nucleus. The protein localises to the chromosome. It is found in the telomere. Transcription factor required to regulate early development. Binds telomeres and plays a key role in genomic stability by regulating telomere elongation. Acts as an activator of spontaneous telomere sister chromatid exchange (T-SCE) and telomere elongation. This is Zinc finger and SCAN domain containing protein 4F (Zscan4f) from Mus musculus (Mouse).